Reading from the N-terminus, the 701-residue chain is MNPDAPTPKNKSSRSRPSDRPQARKKAKIKTKGIYLRAIGDAFVKLNPKSAIRNPVMFLVWVGTIITLSVTIEPNLFGTTQQKNPQLFNGILTGILFFTVWFANFAEAVAEGRGKAQADTLRSTKSETLAKLLSPDGKITDVPSTSLKQGDTVYVVAGDVIPADGEVIMGVASVDESAITGESAPVLKESGSDIASSVTGGTRIISDELIVRVTADPGKGFIDRMIALVEGAERTKTPNEVALTVLLAVLSLVFLFVVATLPVFAYYADTPINVPILVALLVALIPTTIGGLLSAIGIAGMDRVAQFNVIATSGRAVEACGDVNTLVLDKTGTITLGNRLAEEFIPINGHSIEQVASVAWVASVFDDTPEGKSIVRLAEKLGIRYDLDPNQAQGVEFSAKTRMSGTNLPGGREARKGAVGAIKGFVRSRNGRITPELDVAYEQVSQQGGTPLAVCLDNEIYGVIYLKDIVKSGIRERFDQLRRMGVRTIMLTGDNRITASVIAQEAGVDDFIAEATPEDKISVIQREQAQGKLVAMTGDGTNDAPALAQANVGVAMNTGTQAAKEAANMVDLDSDPTKLIDIVSIGKQLLITRGALTTFSLANDIAKYFAIIPVIFASANLQSLNVMNLTSTNSAVLSALIYNALIIPALIPLALKGVQFRPLTANQLLQRNILIYGLGGVIAPFIAIKLIDVLITLVGLA.

The disordered stretch occupies residues 1-28; sequence MNPDAPTPKNKSSRSRPSDRPQARKKAK. Helical transmembrane passes span 57–77, 90–110, 245–265, and 276–296; these read MFLV…PNLF, GILT…EAVA, VLLA…PVFA, and ILVA…LSAI. The 4-aspartylphosphate intermediate role is filled by D329. ATP is bound by residues D366, E370, 397–404, and K416; that span reads FSAKTRMS. Mg(2+) is bound by residues D539 and D543. 3 helical membrane passes run 599-619, 635-655, and 681-701; these read FSLA…FASA, AVLS…PLAL, and VIAP…VGLA.

Belongs to the cation transport ATPase (P-type) (TC 3.A.3) family. Type IA subfamily. In terms of assembly, the system is composed of three essential subunits: KdpA, KdpB and KdpC.

The protein resides in the cell membrane. It catalyses the reaction K(+)(out) + ATP + H2O = K(+)(in) + ADP + phosphate + H(+). Part of the high-affinity ATP-driven potassium transport (or Kdp) system, which catalyzes the hydrolysis of ATP coupled with the electrogenic transport of potassium into the cytoplasm. This subunit is responsible for energy coupling to the transport system and for the release of the potassium ions to the cytoplasm. This chain is Potassium-transporting ATPase ATP-binding subunit, found in Anabaena sp. (strain L31).